The sequence spans 351 residues: S-adenosylmethionine:tRNA ribosyltransferase-isomerase (351 aa).

This sequence belongs to the QueA family. In terms of assembly, monomer.

The protein localises to the cytoplasm. It carries out the reaction 7-aminomethyl-7-carbaguanosine(34) in tRNA + S-adenosyl-L-methionine = epoxyqueuosine(34) in tRNA + adenine + L-methionine + 2 H(+). Its pathway is tRNA modification; tRNA-queuosine biosynthesis. Transfers and isomerizes the ribose moiety from AdoMet to the 7-aminomethyl group of 7-deazaguanine (preQ1-tRNA) to give epoxyqueuosine (oQ-tRNA). The protein is S-adenosylmethionine:tRNA ribosyltransferase-isomerase of Idiomarina loihiensis (strain ATCC BAA-735 / DSM 15497 / L2-TR).